A 719-amino-acid chain; its full sequence is Putative alpha-1,3-mannosyltransferase MNT4 (719 aa).

Residues 1-4 (MKFH) are Cytoplasmic-facing. Residues 5-22 (LKRYVIVTSILLSFFLLF) traverse the membrane as a helical segment. Topologically, residues 23 to 719 (RRQFLPLTQR…KKLIEIWLQD (697 aa)) are lumenal. Asn148, Asn273, and Asn449 each carry an N-linked (GlcNAc...) asparagine glycan.

This sequence belongs to the MNN1/MNT family.

Its subcellular location is the golgi apparatus membrane. Its pathway is protein modification; protein glycosylation. In terms of biological role, responsible for addition of the terminal mannose residues to the outer chain of core N-linked polysaccharides and to O-linked mannotriose. Implicated in late Golgi modifications. The polypeptide is Putative alpha-1,3-mannosyltransferase MNT4 (MNT4) (Candida albicans (strain SC5314 / ATCC MYA-2876) (Yeast)).